The chain runs to 136 residues: Protein scalloped (136 aa).

It is found in the nucleus. Functionally, probable transcription factor that function in the regulation of cell-specific gene expression during drosophila development, particularly in the differentiation of the nervous system. The chain is Protein scalloped (SD) from Junonia coenia (Peacock butterfly).